Reading from the N-terminus, the 314-residue chain is Solute carrier family 25 member 44 (314 aa).

Solcar repeat units lie at residues 18–100 (KKFY…TRKF), 107–210 (SNTV…YAEQ), and 220–302 (PHIV…LKKL). Helical transmembrane passes span 20 to 42 (FYVF…TLIR), 71 to 90 (TGLY…GQCY), 113 to 133 (LVAG…IDVV), 185 to 201 (GYVA…AVWW), 222 to 239 (IVFQ…ASIL), and 278 to 296 (LSAR…VVGY).

Belongs to the mitochondrial carrier (TC 2.A.29) family.

It is found in the mitochondrion membrane. The enzyme catalyses L-valine(in) = L-valine(out). The catalysed reaction is L-leucine(in) = L-leucine(out). In terms of biological role, mitochondrial solute transporter which transports branched-chain amino acid (BCAA; valine, leucine and isoleucine) into mitochondria in brown adipose tissue (BAT). BAT is involved in BCAA catabolism and actively utilizes BCAA in the mitochondria for thermogenesis. This chain is Solute carrier family 25 member 44, found in Homo sapiens (Human).